The primary structure comprises 171 residues: Terminase, small subunit (171 aa).

This sequence belongs to the P23virus small terminase family. As to quaternary structure, homononamer; forms a ring-like structure through which genomic DNA is translocated into the capsid. Heterodimer with the terminase large subunit; the active complex is probably heterooligomeric.

Functionally, the terminase small subunit binds to the packaging initiation site and regulates the ATPase activity of the terminase large subunit. The terminase lies at a unique vertex of the procapsid and is composed of two subunits, a small terminase subunit involved in viral DNA recognition (packaging sequence), and a large terminase subunit. Both terminase subunits heterooligomerize and are docked on the portal protein to form the packaging machine. This chain is Terminase, small subunit, found in Thermus virus P23-45 (Thermus thermophilus phage P23-45).